Reading from the N-terminus, the 1285-residue chain is Protein cramped-like (1285 aa).

The disordered stretch occupies residues 1–161 (MTVKLGDAGS…EGKKVRRQWE (161 aa)). Residues 13–24 (EGLKKLGKRTAD) are compositionally biased toward basic and acidic residues. The segment covering 57–71 (PAPPRGLPTPSPPQG) has biased composition (pro residues). Positions 100–116 (GSGGASGSGPRGKGSDG) are enriched in gly residues. Composition is skewed to low complexity over residues 117 to 126 (GASSSGNVSG) and 134 to 147 (GGSR…GSSG). Basic and acidic residues predominate over residues 148–161 (PEKEEGKKVRRQWE). The SANT domain occupies 158–221 (RQWESWSTED…FYYRTWHKIT (64 aa)). At Ser-304 the chain carries Phosphoserine. Disordered stretches follow at residues 456 to 519 (GQLK…GPHL), 579 to 673 (RADT…VPAS), 766 to 843 (NTAS…SDSD), 994 to 1055 (SSGI…SPAL), 1068 to 1107 (GLSI…LSQG), and 1132 to 1172 (PLSP…YPSD). The segment covering 479 to 503 (ASQSSGESSPESAPAEGAAPSLSSP) has biased composition (low complexity). Composition is skewed to basic and acidic residues over residues 505 to 519 (APDR…GPHL) and 579 to 589 (RADTRSGREHP). 2 stretches are compositionally biased toward polar residues: residues 654–664 (EHLSSQGQPAT) and 766–784 (NTAS…STTP). Positions 792-803 (NSRSPRCSRNPS) are enriched in low complexity. The span at 804–813 (TLRSNKTFPS) shows a compositional bias: polar residues. Residues 833–843 (GPSSTGSSDSD) are compositionally biased toward low complexity. Residues 994–1012 (SSGISPLSSEQATTAISGQ) are compositionally biased toward polar residues. Composition is skewed to low complexity over residues 1069–1086 (LSIP…LSPP) and 1141–1156 (SDSS…SPQP). At Ser-1284 the chain carries Phosphoserine.

It belongs to the cramped family.

Its subcellular location is the nucleus. The polypeptide is Protein cramped-like (Mus musculus (Mouse)).